Consider the following 536-residue polypeptide: Cytochrome P450 78A7 (536 aa).

Residues 36 to 56 (LFLAVVFLSIVTWALAGGGGV) form a helical membrane-spanning segment. C481 lines the heme pocket.

It belongs to the cytochrome P450 family. Requires heme as cofactor.

The protein localises to the membrane. Its function is as follows. Functions probably in association with CYP78A5 in regulating relative growth of the shoot apical meristem and plant organs via a non-cell-autonomous signal. The chain is Cytochrome P450 78A7 (CYP78A7) from Arabidopsis thaliana (Mouse-ear cress).